The following is a 248-amino-acid chain: NH(3)-dependent NAD(+) synthetase (248 aa).

Residue 31–38 coordinates ATP; it reads GLSGGVDS. Residue D37 participates in Mg(2+) binding. R114 provides a ligand contact to deamido-NAD(+). T134 serves as a coordination point for ATP. E139 provides a ligand contact to Mg(2+). Deamido-NAD(+) is bound by residues K147 and D154. Residues K163 and T185 each coordinate ATP. 232–233 is a deamido-NAD(+) binding site; the sequence is HK.

The protein belongs to the NAD synthetase family. As to quaternary structure, homodimer.

The catalysed reaction is deamido-NAD(+) + NH4(+) + ATP = AMP + diphosphate + NAD(+) + H(+). The protein operates within cofactor biosynthesis; NAD(+) biosynthesis; NAD(+) from deamido-NAD(+) (ammonia route): step 1/1. Functionally, catalyzes the ATP-dependent amidation of deamido-NAD to form NAD. Uses ammonia as a nitrogen source. The protein is NH(3)-dependent NAD(+) synthetase of Mycoplasma pneumoniae (strain ATCC 29342 / M129 / Subtype 1) (Mycoplasmoides pneumoniae).